The primary structure comprises 299 residues: tRNA dimethylallyltransferase (299 aa).

13–20 (GPTASGKT) lines the ATP pocket. 15 to 20 (TASGKT) provides a ligand contact to substrate. Positions 38-41 (DSRQ) are interaction with substrate tRNA.

This sequence belongs to the IPP transferase family. Monomer. Requires Mg(2+) as cofactor.

The enzyme catalyses adenosine(37) in tRNA + dimethylallyl diphosphate = N(6)-dimethylallyladenosine(37) in tRNA + diphosphate. In terms of biological role, catalyzes the transfer of a dimethylallyl group onto the adenine at position 37 in tRNAs that read codons beginning with uridine, leading to the formation of N6-(dimethylallyl)adenosine (i(6)A). The polypeptide is tRNA dimethylallyltransferase (Prochlorococcus marinus (strain NATL2A)).